The sequence spans 404 residues: Argininosuccinate synthase (404 aa).

Position 7–15 (7–15 (AYSGGLDTS)) interacts with ATP. Residues Tyr85 and Ser90 each coordinate L-citrulline. Gly115 contacts ATP. The L-aspartate site is built by Thr117, Asn121, and Asp122. Asn121 contacts L-citrulline. 5 residues coordinate L-citrulline: Arg125, Ser178, Ser187, Glu264, and Tyr276.

Belongs to the argininosuccinate synthase family. Type 1 subfamily. In terms of assembly, homotetramer.

It is found in the cytoplasm. It carries out the reaction L-citrulline + L-aspartate + ATP = 2-(N(omega)-L-arginino)succinate + AMP + diphosphate + H(+). It functions in the pathway amino-acid biosynthesis; L-arginine biosynthesis; L-arginine from L-ornithine and carbamoyl phosphate: step 2/3. The protein is Argininosuccinate synthase of Rhodopirellula baltica (strain DSM 10527 / NCIMB 13988 / SH1).